The primary structure comprises 147 residues: Ponticulin-like protein C3 (147 aa).

The N-terminal stretch at 1 to 20 is a signal peptide; it reads MKFTKSLLLLIVAVFASSNA. A lipid anchor (GPI-like-anchor amidated asparagine) is attached at Asn118. Asn118 carries N-linked (GlcNAc...) asparagine glycosylation. Positions 119 to 147 are cleaved as a propeptide — removed in mature form; sequence SSESDSSDSTRIGASFALFALALLSMLAL.

This sequence belongs to the ponticulin family. The GPI-like-anchor contains a phosphoceramide group, rather than a phosphatidyl group.

Its subcellular location is the cell membrane. The protein is Ponticulin-like protein C3 (ponC3) of Dictyostelium discoideum (Social amoeba).